The primary structure comprises 991 residues: Gingipain R1 (991 aa).

The signal sequence occupies residues 1–24 (MKNLNKFVSIALCSSLLGGMAFAQ). A propeptide spanning residues 25 to 227 (QTELGRNPNV…RMFMNYEPGR (203 aa)) is cleaved from the precursor. 7 residues coordinate Ca(2+): Asp305, Val327, Asp330, Tyr332, Glu334, Glu388, and His393. Residue His438 is the Proton donor of the active site. The active-site Nucleophile is the Cys471. Ca(2+)-binding residues include Phe476, Glu485, Asp519, Glu520, Glu523, and His529.

This sequence belongs to the peptidase C25 family.

The protein resides in the secreted. The enzyme catalyses Hydrolysis of proteins and small molecule substrates, with a preference for Arg in P1.. With respect to regulation, requires cysteine for activation and Ca(2+) and/or Mg(2+) for stabilization. It is stimulated by glycine-containing dipeptides. It is resistant to inhibition by proteinase inhibitors in human plasma. Its function is as follows. Thiol protease. Acts synergistically with RgpB to catalyze the maturation of fimbrial subunits, such as FimA. Its proteolytic activity is a major factor in both periodontal tissue destruction and in evasion of host defense mechanisms. The chain is Gingipain R1 (rgpA) from Porphyromonas gingivalis (Bacteroides gingivalis).